Here is a 479-residue protein sequence, read N- to C-terminus: Ribulose bisphosphate carboxylase large chain (479 aa).

The propeptide occupies 1-2 (MS). Proline 3 bears the N-acetylproline mark. Residues threonine 65, asparagine 123, 173 to 177 (TIKPK), and 201 to 204 (KDDE) contribute to the substrate site. Lysine 175 acts as the Proton acceptor in catalysis. 3 residues coordinate Mg(2+): lysine 201, aspartate 203, and glutamate 204. Residue lysine 201 is modified to N6-carboxylysine. Serine 208 is modified (phosphoserine). The Proton acceptor role is filled by histidine 294. Substrate contacts are provided by residues 294–295 (HR) and histidine 327. Residue threonine 330 is modified to Phosphothreonine. Substrate is bound by residues lysine 334 and 379-381 (SGG).

The protein belongs to the RuBisCO large chain family. Type I subfamily. In terms of assembly, heterohexadecamer of 8 large chains and 8 small chains; disulfide-linked. The disulfide link is formed within the large subunit homodimers. Interacts with RBCX1 and RBCX1. An intermediate complex made of eight RbcL subunits interacts with the chaperone BSD2. Requires Mg(2+) as cofactor. Post-translationally, the disulfide bond which can form in the large chain dimeric partners within the hexadecamer appears to be associated with oxidative stress and protein turnover.

It localises to the plastid. The protein resides in the chloroplast. It catalyses the reaction 2 (2R)-3-phosphoglycerate + 2 H(+) = D-ribulose 1,5-bisphosphate + CO2 + H2O. The enzyme catalyses D-ribulose 1,5-bisphosphate + O2 = 2-phosphoglycolate + (2R)-3-phosphoglycerate + 2 H(+). In terms of biological role, ruBisCO catalyzes two reactions: the carboxylation of D-ribulose 1,5-bisphosphate, the primary event in carbon dioxide fixation, as well as the oxidative fragmentation of the pentose substrate in the photorespiration process. Both reactions occur simultaneously and in competition at the same active site. Binds to abscisic acid (ABA). This chain is Ribulose bisphosphate carboxylase large chain, found in Arabidopsis thaliana (Mouse-ear cress).